Here is an 85-residue protein sequence, read N- to C-terminus: Cell division topological specificity factor (85 aa).

This sequence belongs to the MinE family.

Its function is as follows. Prevents the cell division inhibition by proteins MinC and MinD at internal division sites while permitting inhibition at polar sites. This ensures cell division at the proper site by restricting the formation of a division septum at the midpoint of the long axis of the cell. The protein is Cell division topological specificity factor of Dechloromonas aromatica (strain RCB).